The chain runs to 55 residues: Sec-independent protein translocase protein TatA (55 aa).

Residues 1 to 21 (MSLGPWQLFLVLIIILVLFGA) form a helical membrane-spanning segment.

The protein belongs to the TatA/E family. The Tat system comprises two distinct complexes: a TatABC complex, containing multiple copies of TatA, TatB and TatC subunits, and a separate TatA complex, containing only TatA subunits. Substrates initially bind to the TatABC complex, which probably triggers association of the separate TatA complex to form the active translocon.

It is found in the cell membrane. Functionally, part of the twin-arginine translocation (Tat) system that transports large folded proteins containing a characteristic twin-arginine motif in their signal peptide across membranes. TatA could form the protein-conducting channel of the Tat system. This Wolbachia pipientis wMel protein is Sec-independent protein translocase protein TatA.